The chain runs to 135 residues: Histone H1, macronuclear (135 aa).

Positions 1-17 (MPAKTATAVKRTTTTKK) are enriched in low complexity. Positions 1-135 (MPAKTATAVK…GGKKKSAKKN (135 aa)) are disordered. 2 stretches are compositionally biased toward basic residues: residues 18-54 (SAAKRKTSKAVKKAGKRTQSKAKGAQKVKKAATRRTP) and 62-79 (KATKKAGARKASTKRSAT). Residues 80–112 (KKTTAAPAAAAAPATDAPAAAATPSKATGSAKK) are compositionally biased toward low complexity. Positions 113–135 (ASARKSSAKKPAKGGKKKSAKKN) are enriched in basic residues.

It is found in the nucleus. The protein localises to the chromosome. Functionally, histones H1 are necessary for the condensation of nucleosome chains into higher-order structures. The chain is Histone H1, macronuclear from Euplotes eurystomus (Ciliate).